The following is a 472-amino-acid chain: WAS protein family homolog DDB_G0292878 (472 aa).

A disordered region spans residues 279-472 (LPTYDNSNSG…ESDTDSSEWE (194 aa)). The segment covering 282–299 (YDNSNSGSAPVNQSSGGD) has biased composition (polar residues). Residues 300–314 (NNVNNNNNNNNSNNS) are compositionally biased toward low complexity. A compositionally biased stretch (pro residues) spans 320–356 (PPQPTNAPPPPPPPPQSANAPPPPPPPPVSAPPPFNP). Over residues 363–373 (NDDDDDDDDDN) the composition is skewed to acidic residues. The segment covering 374–383 (GGGGGPGGAI) has biased composition (gly residues). One can recognise a WH2 domain in the interval 382-401 (AIGDLLADIRRGHKNRLKKA). The span at 457 to 472 (TDDQDGESDTDSSEWE) shows a compositional bias: acidic residues.

The protein belongs to the WASH1 family.

Acts as a nucleation-promoting factor by activating the Arp2/3 complex to induce actin polymerization. This chain is WAS protein family homolog DDB_G0292878, found in Dictyostelium discoideum (Social amoeba).